Here is a 509-residue protein sequence, read N- to C-terminus: tRNA-2-methylthio-N(6)-dimethylallyladenosine synthase (509 aa).

Residues 1-15 are compositionally biased toward polar residues; that stretch reads MNEQQRLASQQVNSS. The interval 1 to 26 is disordered; that stretch reads MNEQQRLASQQVNSSTKKEEKDYSKY. A compositionally biased stretch (basic and acidic residues) spans 16-25; that stretch reads TKKEEKDYSK. The MTTase N-terminal domain maps to 66-184; sequence RKFYIRTYGC…LPYILKDAMF (119 aa). [4Fe-4S] cluster-binding residues include C75, C111, C145, C221, C225, and C228. Positions 207–437 constitute a Radical SAM core domain; the sequence is RRGDIKAWVN…NALVNKLAIE (231 aa). The region spanning 440–503 is the TRAM domain; the sequence is DRYKGQIVEV…TWSLNGELVE (64 aa).

This sequence belongs to the methylthiotransferase family. MiaB subfamily. As to quaternary structure, monomer. [4Fe-4S] cluster serves as cofactor.

Its subcellular location is the cytoplasm. It catalyses the reaction N(6)-dimethylallyladenosine(37) in tRNA + (sulfur carrier)-SH + AH2 + 2 S-adenosyl-L-methionine = 2-methylsulfanyl-N(6)-dimethylallyladenosine(37) in tRNA + (sulfur carrier)-H + 5'-deoxyadenosine + L-methionine + A + S-adenosyl-L-homocysteine + 2 H(+). Catalyzes the methylthiolation of N6-(dimethylallyl)adenosine (i(6)A), leading to the formation of 2-methylthio-N6-(dimethylallyl)adenosine (ms(2)i(6)A) at position 37 in tRNAs that read codons beginning with uridine. The polypeptide is tRNA-2-methylthio-N(6)-dimethylallyladenosine synthase (Bacillus thuringiensis (strain Al Hakam)).